Consider the following 198-residue polypeptide: Patulin synthesis protein F (198 aa).

A signal peptide spans methionine 1–alanine 18. N-linked (GlcNAc...) asparagine glycosylation is found at asparagine 128 and asparagine 184.

This sequence belongs to the patF family.

The protein resides in the cytoplasm. Its subcellular location is the cytosol. The catalysed reaction is phyllostine = neopatulin. It participates in mycotoxin biosynthesis; patulin biosynthesis. Its function is as follows. Part of the gene cluster that mediates the biosynthesis of patulin, an acetate-derived tetraketide mycotoxin produced by several fungal species that shows antimicrobial properties against several bacteria. PatF catalyzes the conversion of phyllostine into neopatulin. The pathway begins with the synthesis of 6-methylsalicylic acid by the polyketide synthase (PKS) patK via condensation of acetate and malonate units. The 6-methylsalicylic acid decarboxylase patG then catalyzes the decarboxylation of 6-methylsalicylic acid to yield m-cresol (also known as 3-methylphenol). These first reactions occur in the cytosol. The intermediate m-cresol is then transported into the endoplasmic reticulum where the cytochrome P450 monooxygenase patH converts it to m-hydroxybenzyl alcohol, which is further converted to gentisyl alcohol by the cytochrome P450 monooxygenase patI. The oxidoreductases patJ and patO further convert gentisyl alcohol to isoepoxydon in the vacuole. PatN catalyzes then the transformation of isoepoxydon into phyllostine. The cluster protein patF is responsible for the conversion from phyllostine to neopatulin whereas the alcohol dehydrogenase patD converts neopatulin to E-ascladiol. The steps between isoepoxydon and E-ascladiol occur in the cytosol, and E-ascladiol is probably secreted to the extracellular space by one of the cluster-specific transporters patC or patM. Finally, the secreted patulin synthase patE catalyzes the conversion of E-ascladiol to patulin. In Aspergillus clavatus (strain ATCC 1007 / CBS 513.65 / DSM 816 / NCTC 3887 / NRRL 1 / QM 1276 / 107), this protein is Patulin synthesis protein F.